The chain runs to 746 residues: NAD(P)H-quinone oxidoreductase subunit 5, chloroplastic (746 aa).

The next 16 helical transmembrane spans lie at 9–29 (WIIPFIPLPVPILIGVGLLLF), 40–60 (WAFPSIFLLTIVMIFSIDLSI), 89–109 (IDSLTSIMSILITTVGILVLI), 121–140 (YLRFFTYMSFFNTSMLGLVT), 147–167 (VYIFWELVGMCSYLLIGFWFT), 185–205 (GDFGLLLGILGFYWITGSLEF), 219–239 (NEVNILFVTLCALLLFCGSVA), 258–278 (TPISALIHAATMVAAGIFLVA), 280–300 (LLPLFIVIPSIMSGIALIGII), 327–347 (LGYMMLALGMGSYRAALFHLI), 354–374 (ALLFLGSGSIIHSMEAIVGYS), 396–416 (MSFLIGTLSLCGIPPFACFWS), 425–445 (WLYSPIFAIIACSTAGLTAFY), 552–572 (LFSMLVLVLFTFFVGSIGISF), 606–626 (FFINATFSVSIAFFGLFIASF), and 726–746 (SYIFFFVLIFLLICYYIYLFP).

It belongs to the complex I subunit 5 family. In terms of assembly, NDH is composed of at least 16 different subunits, 5 of which are encoded in the nucleus.

The protein resides in the plastid. It is found in the chloroplast thylakoid membrane. The catalysed reaction is a plastoquinone + NADH + (n+1) H(+)(in) = a plastoquinol + NAD(+) + n H(+)(out). It catalyses the reaction a plastoquinone + NADPH + (n+1) H(+)(in) = a plastoquinol + NADP(+) + n H(+)(out). In terms of biological role, NDH shuttles electrons from NAD(P)H:plastoquinone, via FMN and iron-sulfur (Fe-S) centers, to quinones in the photosynthetic chain and possibly in a chloroplast respiratory chain. The immediate electron acceptor for the enzyme in this species is believed to be plastoquinone. Couples the redox reaction to proton translocation, and thus conserves the redox energy in a proton gradient. This is NAD(P)H-quinone oxidoreductase subunit 5, chloroplastic (ndhF) from Vicia faba (Broad bean).